Here is a 320-residue protein sequence, read N- to C-terminus: ATP-dependent 6-phosphofructokinase (320 aa).

Gly11 lines the ATP pocket. 21 to 25 (RAVVR) is an ADP binding site. ATP contacts are provided by residues 72–73 (RC) and 102–105 (GDGS). Asp103 provides a ligand contact to Mg(2+). 125 to 127 (TID) lines the substrate pocket. Asp127 functions as the Proton acceptor in the catalytic mechanism. ADP is bound at residue Arg154. Substrate-binding positions include Arg162 and 169-171 (MGR). ADP is bound by residues 185–187 (GAE) and 214–216 (KTH). Residues Glu223, Arg244, and 250–253 (HIQR) contribute to the substrate site.

Belongs to the phosphofructokinase type A (PFKA) family. ATP-dependent PFK group I subfamily. Prokaryotic clade 'B1' sub-subfamily. In terms of assembly, homotetramer. Requires Mg(2+) as cofactor.

The protein resides in the cytoplasm. It carries out the reaction beta-D-fructose 6-phosphate + ATP = beta-D-fructose 1,6-bisphosphate + ADP + H(+). It participates in carbohydrate degradation; glycolysis; D-glyceraldehyde 3-phosphate and glycerone phosphate from D-glucose: step 3/4. Its activity is regulated as follows. Allosterically activated by ADP and other diphosphonucleosides, and allosterically inhibited by phosphoenolpyruvate. In terms of biological role, catalyzes the phosphorylation of D-fructose 6-phosphate to fructose 1,6-bisphosphate by ATP, the first committing step of glycolysis. The chain is ATP-dependent 6-phosphofructokinase from Clostridium botulinum (strain Alaska E43 / Type E3).